We begin with the raw amino-acid sequence, 96 residues long: Cell division protein FtsB (96 aa).

Residues 1-11 are Cytoplasmic-facing; sequence MDIKSNSFFYI. The chain crosses the membrane as a helical span at residues 12–29; sequence FISVVLLLIAILQYDLWF. At 30-96 the chain is on the periplasmic side; sequence SNTGFIKYQA…KQGEVFYSVK (67 aa).

Belongs to the FtsB family. Part of a complex composed of FtsB, FtsL and FtsQ.

It is found in the cell inner membrane. In terms of biological role, essential cell division protein. May link together the upstream cell division proteins, which are predominantly cytoplasmic, with the downstream cell division proteins, which are predominantly periplasmic. In Francisella tularensis subsp. tularensis (strain SCHU S4 / Schu 4), this protein is Cell division protein FtsB.